Consider the following 263-residue polypeptide: Tryptophan 2,3-dioxygenase (263 aa).

Substrate-binding positions include 32–36 (FIVIH), tyrosine 94, and arginine 98. Histidine 221 is a heme binding site. A substrate-binding site is contributed by threonine 235.

The protein belongs to the tryptophan 2,3-dioxygenase family. As to quaternary structure, homotetramer. Heme serves as cofactor.

It carries out the reaction L-tryptophan + O2 = N-formyl-L-kynurenine. Its pathway is amino-acid degradation; L-tryptophan degradation via kynurenine pathway; L-kynurenine from L-tryptophan: step 1/2. In terms of biological role, heme-dependent dioxygenase that catalyzes the oxidative cleavage of the L-tryptophan (L-Trp) pyrrole ring and converts L-tryptophan to N-formyl-L-kynurenine. Catalyzes the oxidative cleavage of the indole moiety. The polypeptide is Tryptophan 2,3-dioxygenase (Caulobacter vibrioides (strain ATCC 19089 / CIP 103742 / CB 15) (Caulobacter crescentus)).